The primary structure comprises 266 residues: UPF0294 protein YafD (266 aa).

It belongs to the UPF0294 family.

The protein resides in the cytoplasm. The sequence is that of UPF0294 protein YafD from Salmonella newport (strain SL254).